Consider the following 330-residue polypeptide: Autoinducer 2 import system permease protein LsrD (330 aa).

At 1 to 4 (MRIR) the chain is on the cytoplasmic side. The helical transmembrane segment at 5–25 (YGWELALAALLVIEIVAFGAI) threads the bilayer. At 26–42 (NPRMLDLNMLLFSTSDF) the chain is on the periplasmic side. Residues 43 to 63 (ICIGIVALPLTMVIVSGGIDI) traverse the membrane as a helical segment. Over 64–67 (SFGS) the chain is Cytoplasmic. 2 helical membrane passes run 68 to 88 (TIGLCAIALGVLFQSGVPMPL) and 89 to 109 (AILLTLLLGALCGLINAGLII). Residues 110-115 (YTKVNP) are Cytoplasmic-facing. The chain crosses the membrane as a helical span at residues 116 to 136 (LVITLGTLYLFAGSALLLSGM). Residues 137–159 (AGATGYEGIGGFPMAFTDFANLD) lie on the Periplasmic side of the membrane. Residues 160 to 180 (VLGLPVPLIIFLICLLVFWLW) form a helical membrane-spanning segment. The Cytoplasmic segment spans residues 181-209 (LHKTHAGRNVFLIGQSPRVAVYSAIPVNR). A helical membrane pass occupies residues 210-230 (TLCALYAMTGLASAVAAVLLV). At 231–237 (SYFGSAR) the chain is on the periplasmic side. Helical transmembrane passes span 238-258 (SDLGASFLMPAITAVVLGGAN) and 259-279 (IYGGSGSIIGTAIAVLLVGYL). Over 280–285 (QQGLQM) the chain is Periplasmic. A helical transmembrane segment spans residues 286–306 (AGVPNQVSSALSGALLIVVVV). Over 307–330 (GRSVSLHRQQIKEWLARRANNPLP) the chain is Cytoplasmic.

Belongs to the binding-protein-dependent transport system permease family. AraH/RbsC subfamily. The complex is composed of two ATP-binding proteins (LsrA), two transmembrane proteins (LsrC and LsrD) and a solute-binding protein (LsrB).

The protein resides in the cell inner membrane. Part of the ABC transporter complex LsrABCD involved in autoinducer 2 (AI-2) import. Probably responsible for the translocation of the substrate across the membrane. In Escherichia coli (strain SMS-3-5 / SECEC), this protein is Autoinducer 2 import system permease protein LsrD (lsrD).